The following is a 254-amino-acid chain: Homeobox protein Nkx-6.3 (254 aa).

Disordered regions lie at residues 112–140 (QDWR…RPTF) and 191–228 (KSAV…DPDS). Over residues 120 to 129 (ALSSASNTEG) the composition is skewed to polar residues. A DNA-binding region (homeobox) is located at residues 133 to 192 (KKHTRPTFTGHQIFALEKTFEQTKYLAGPERARLAFSLGMSESQVKVWFQNRRTKWRKKS).

It localises to the nucleus. Functionally, putative transcription factor, which may be involved in patterning of central nervous system and pancreas. This chain is Homeobox protein Nkx-6.3 (nkx6-3), found in Xenopus laevis (African clawed frog).